An 834-amino-acid polypeptide reads, in one-letter code: Kinesin-like protein KIF18B (834 aa).

One can recognise a Kinesin motor domain in the interval 9–353 (VVRVVVRVRP…LKYADRAKEI (345 aa)). 111–118 (GATGAGKT) serves as a coordination point for ATP. Residues 368–404 (ISQYATICQQLQAEVAFLREKLQMYEAGAQALQQQCS) adopt a coiled-coil conformation. Disordered regions lie at residues 400–508 (QQQC…ADHS), 602–642 (LGAP…NLEM), 655–686 (RGSL…RVCP), and 800–834 (KKPN…TESY). A compositionally biased stretch (low complexity) spans 411–432 (SIPQSLSSSSLQPGPSSQSSTL). A Phosphothreonine modification is found at Thr-431. Residues 462-474 (EQEQCPQDKQCPT) show a composition bias toward polar residues. At Ser-484 the chain carries Phosphoserine. The span at 611-620 (TSDKTFQKPT) shows a compositional bias: basic and acidic residues. The short motif at 619–627 (PTKEKKRKL) is the Nuclear localization signal element. 2 positions are modified to phosphoserine: Ser-634 and Ser-657. Thr-669 is modified (phosphothreonine). Ser-814 is modified (phosphoserine).

This sequence belongs to the TRAFAC class myosin-kinesin ATPase superfamily. Kinesin family. Interacts with MAPRE1; this interaction is required for efficient accumulation at microtubule plus ends. Interacts with KIF2C at microtubule tips; this interaction increases the affinity of both partners for microtubule plus ends and is required for robust microtubule depolymerization. KIF2C phosphorylation by AURKA or AURKB strongly reduces KIF18B-binding.

It is found in the nucleus. Its subcellular location is the cytoplasm. It localises to the cytoskeleton. In complex with KIF2C, constitutes the major microtubule plus-end depolymerizing activity in mitotic cells. Its major role may be to transport KIF2C and/or MAPRE1 along microtubules. This Mus musculus (Mouse) protein is Kinesin-like protein KIF18B (Kif18b).